Here is a 351-residue protein sequence, read N- to C-terminus: Fe(3+) ions import ATP-binding protein FbpC (351 aa).

An ABC transporter domain is found at 7-237; it reads VVLKNICKRF…PKSMFMANFM (231 aa). 39-46 is a binding site for ATP; sequence GPSGCGKT.

It belongs to the ABC transporter superfamily. Fe(3+) ion importer (TC 3.A.1.10) family. In terms of assembly, the complex is composed of two ATP-binding proteins (FbpC), two transmembrane proteins (FbpB) and a solute-binding protein (FbpA).

It localises to the cell inner membrane. The catalysed reaction is Fe(3+)(out) + ATP + H2O = Fe(3+)(in) + ADP + phosphate + H(+). In terms of biological role, part of the ABC transporter complex FbpABC involved in Fe(3+) ions import. Responsible for energy coupling to the transport system. The protein is Fe(3+) ions import ATP-binding protein FbpC of Vibrio cholerae serotype O1 (strain ATCC 39315 / El Tor Inaba N16961).